A 735-amino-acid chain; its full sequence is MSSNLTSNEMSSTSAIVEPPEAVKGNERDKSTRRSTSQVVRPEKHEVENALEDQCSSSSLPKEAQYYAKLDKKLEGKDPRSQFYEAVRLSADIFAHKFEKAVCSRQTFEPTNSIIKVLNTAEEEMLHEKVVPLPVSSKLQYYLNRGRYDTIFDRDEQLQRTADPMADEPDHVEKRVTSILEQASREMEEGEVEPVFYDGSDEDQELPIDLGAMRNLQRTNKFAARSSRMAARRGGRPGYRGAFRGAARGAPSRRPAPAAEVAPETPVAAPMAPAAPAAPATPEAAPAAEVMDTSIATEMPQESAVDLSNVSAATEMDTSKEGEASRPTSEKKKKIRTTEMDRLMSMDLGPKDGGRVGELGHMWPESRRRPAAPLPETPAAQPRKSLPRRAAEKKKPEDSDAAEEQEVEMEVDNDASTSTPRNARGGRGGGNRRGSRRGQKRTSGGSGKLVEPKKEPVDEPAEKIPKRSEAAPEVPATATTKEAPPSTSSSPPDAPATPATPASSDSRDSPRKIRAMIFSLTGSPPESETPPVLQQEQVISTAAPTAGRHPNIIQQVPHINRIPPQPLRRLTAPQAPPASQPEEPPVQQTVPVVKVELASAPAPIVRDPQSTEPVPPAMPTLVENNHEATLILPPNKTSDYTRWNAQDLINWVRLLITNNVDSTIAIMVREEFDGETLACLVLDDDFRKEVPIPYGHYKKMKIYGTEVLNHYRTEKYQADLRKFHEELAAWKAQQR.

Residues 1 to 15 (MSSNLTSNEMSSTSA) show a composition bias toward polar residues. Disordered regions lie at residues 1–59 (MSSN…SSSS), 223–288 (AARS…APAA), and 300–534 (PQES…PVLQ). Residues 224–503 (ARSSRMAARR…APATPATPAS (280 aa)) are RNA-binding. A compositionally biased stretch (low complexity) spans 239–288 (YRGAFRGAARGAPSRRPAPAAEVAPETPVAAPMAPAAPAAPATPEAAPAA). 2 stretches are compositionally biased toward basic and acidic residues: residues 317-355 (DTSK…DGGR) and 389-398 (RAAEKKKPED). Acidic residues predominate over residues 399–413 (SDAAEEQEVEMEVDN). The span at 450 to 470 (VEPKKEPVDEPAEKIPKRSEA) shows a compositional bias: basic and acidic residues. Residues 471–504 (APEVPATATTKEAPPSTSSSPPDAPATPATPASS) show a composition bias toward low complexity. Over residues 520-534 (LTGSPPESETPPVLQ) the composition is skewed to polar residues. The interval 621 to 712 (LVENNHEATL…YGTEVLNHYR (92 aa)) is SAM-like.

As to quaternary structure, homodimer. Interacts with ubc-9. Binds through its N-terminal region to the N-terminal region of sor-1. In terms of processing, sumoylated by ubc-9. Sumoylation is required for the transcriptional regulation of homeotic genes. In terms of tissue distribution, widely expressed. Weakly expressed in most somatic cells of 50-cell stage embryos. At 200 cell stage, it is strongly expressed. By comma stage, it is expressed in most somatic cells.

Its subcellular location is the nucleus. Its function is as follows. Polycomb group (PcG) protein. PcG proteins act by forming multiprotein complexes, which are required to maintain the transcriptionally repressive state of homeotic genes throughout development. PcG proteins are not required to initiate repression, but to maintain it during later stages of development. Also required to repress expression of other genes and for localization of sor-1. Binds RNA. This chain is Polycomb protein sop-2 (sop-2), found in Caenorhabditis elegans.